Here is a 391-residue protein sequence, read N- to C-terminus: MESETEPEPVTLLVKSPNQRHRDLELSGDRGWSVGHLKAHLSRVYPERPRPEDQRLIYSGKLLLDHQCLRDLLPKQEKRHVLHLVCNVKSPSKMPEINAKVAESTEEPAGSNRGQYPEDSSSDGLRQREVLRNLSSPGWENISRPEAAQQAFQGLGPGFSGYTPYGWLQLSWFQQIYARQYYMQYLAATAASGAFVPPPSAQEIPVVSAPAPAPIHNQFPAENQPANQNAAPQVVVNPGANQNLRMNAQGGPIVEEDDEINRDWLDWTYSAATFSVFLSILYFYSSLSRFLMVMGATVVMYLHHVGWFPFRPRPVQNFPNDGPPPDIVNQDPNNNLQEGTDPETEDPNHVPPDRGVLDGEQTGPSFMSTAWLVFKTFFASLLPEGPPAIAN.

Methionine 1 is subject to N-acetylmethionine. Topologically, residues 1 to 263 (MESETEPEPV…VEEDDEINRD (263 aa)) are cytoplasmic. The 63-residue stretch at 10–72 (VTLLVKSPNQ…LLDHQCLRDL (63 aa)) folds into the Ubiquitin-like domain. The interval 100–126 (KVAESTEEPAGSNRGQYPEDSSSDGLR) is disordered. Polar residues predominate over residues 112–124 (NRGQYPEDSSSDG). Residues 115–200 (QYPEDSSSDG…ASGAFVPPPS (86 aa)) form an interaction with UBQLN1 region. A Phosphoserine modification is found at serine 135. The helical transmembrane segment at 264–284 (WLDWTYSAATFSVFLSILYFY) threads the bilayer. Residues 285-289 (SSLSR) are Lumenal-facing. The helical transmembrane segment at 290–310 (FLMVMGATVVMYLHHVGWFPF) threads the bilayer. The Cytoplasmic portion of the chain corresponds to 311 to 391 (RPRPVQNFPN…LPEGPPAIAN (81 aa)). The tract at residues 318-359 (FPNDGPPPDIVNQDPNNNLQEGTDPETEDPNHVPPDRGVLDG) is disordered. Over residues 346–357 (DPNHVPPDRGVL) the composition is skewed to basic and acidic residues.

In terms of assembly, interacts with PSEN1 and PSEN2. Interacts with UBXN6. Interacts with UBQLN1, UBQLN2 and UBQLN4. Component of the HRD1 complex, which comprises at least SYNV1/HRD1, FAM8A1, HERPUD1/HERP, OS9, SEL1L and UBE2J1. FAM8A1 binding to SYNV1 may promote recruitment of HERPUD1 to the HRD1 complex.

It localises to the endoplasmic reticulum membrane. Its function is as follows. Component of the endoplasmic reticulum quality control (ERQC) system also called ER-associated degradation (ERAD) involved in ubiquitin-dependent degradation of misfolded endoplasmic reticulum proteins. Binds to ubiquilins and this interaction is required for efficient degradation of CD3D via the ERAD pathway. The protein is Homocysteine-responsive endoplasmic reticulum-resident ubiquitin-like domain member 1 protein (HERPUD1) of Pongo abelii (Sumatran orangutan).